Reading from the N-terminus, the 123-residue chain is MLQQESRVRVADNSGAREILVIRVLGGSVKRSAGIGDVVVATVKEAAPGGTVKENEIVRAVIVRTKKPTRRPDGSYIAFDENAAVIIKANDNDPRGTRIFGPVARELREKKFMKIVSLAPEVL.

This sequence belongs to the universal ribosomal protein uL14 family. Part of the 50S ribosomal subunit. Forms a cluster with proteins L3 and L19. In the 70S ribosome, L14 and L19 interact and together make contacts with the 16S rRNA in bridges B5 and B8.

Binds to 23S rRNA. Forms part of two intersubunit bridges in the 70S ribosome. The protein is Large ribosomal subunit protein uL14 of Corynebacterium urealyticum (strain ATCC 43042 / DSM 7109).